The chain runs to 239 residues: Endolytic peptidoglycan transglycosylase RlpA (239 aa).

The N-terminal stretch at 1–25 (MTLTRKTLFLLTAAFGTHSLQTASA) is a signal peptide. The region spanning 160–239 (VAENKDIFID…GMVRAVLTAG (80 aa)) is the SPOR domain.

It belongs to the RlpA family.

Functionally, lytic transglycosylase with a strong preference for naked glycan strands that lack stem peptides. The sequence is that of Endolytic peptidoglycan transglycosylase RlpA from Neisseria meningitidis serogroup B (strain ATCC BAA-335 / MC58).